A 184-amino-acid polypeptide reads, in one-letter code: GTP cyclohydrolase 1 (184 aa).

Zn(2+) is bound by residues C75, H78, and C146.

Belongs to the GTP cyclohydrolase I family. Toroid-shaped homodecamer, composed of two pentamers of five dimers.

It carries out the reaction GTP + H2O = 7,8-dihydroneopterin 3'-triphosphate + formate + H(+). It functions in the pathway cofactor biosynthesis; 7,8-dihydroneopterin triphosphate biosynthesis; 7,8-dihydroneopterin triphosphate from GTP: step 1/1. This Streptococcus sanguinis (strain SK36) protein is GTP cyclohydrolase 1.